Consider the following 765-residue polypeptide: Protein transport protein Sec23A (765 aa).

At T2 the chain carries N-acetylthreonine. Positions 61, 66, 85, and 88 each coordinate Zn(2+). T308 carries the post-translational modification Phosphothreonine. One copy of the Gelsolin-like repeat lies at 632–718 (PEPVLLDSSS…EHGGSQARFL (87 aa)).

This sequence belongs to the SEC23/SEC24 family. SEC23 subfamily. As to quaternary structure, COPII is composed of at least five proteins: the Sec23/24 complex, the Sec13/31 complex and Sar1. Interacts with SEC23IP. Interacts with HTR4. Interacts with SEC16A. Interacts with SLC6A4. Interacts (as part of the Sec23/24 complex) with SEC22B; recruits SEC22B into COPII-coated vesicles and allows the transport of this cargo from the endoplasmic reticulum to the Golgi. Interacts (via Gelsolin-like repeat) with MIA2 and MIA3; specifically involved in the transport of large cargos like the collagen COL7A1. Interacts with DDHD1. Interacts with TMEM39A. Interacts with SACM1L; this interaction is reduced in the absence of TMEM39A. Interacts with kinase FAM20C; transport of FAM20C from the endoplasmic reticulum to the Golgi is likely to be mediated by COPII vesicles. High levels in brain and fibroblasts.

It localises to the cytoplasmic vesicle. It is found in the COPII-coated vesicle membrane. Its subcellular location is the endoplasmic reticulum membrane. The protein resides in the cytoplasm. The protein localises to the cytosol. Component of the coat protein complex II (COPII) which promotes the formation of transport vesicles from the endoplasmic reticulum (ER). The coat has two main functions, the physical deformation of the endoplasmic reticulum membrane into vesicles and the selection of cargo molecules for their transport to the Golgi complex. Required for the translocation of insulin-induced glucose transporter SLC2A4/GLUT4 to the cell membrane. The sequence is that of Protein transport protein Sec23A from Mus musculus (Mouse).